Here is an 81-residue protein sequence, read N- to C-terminus: Sulfur carrier protein TusA (81 aa).

The active-site Cysteine persulfide intermediate is Cys19.

It belongs to the sulfur carrier protein TusA family.

It localises to the cytoplasm. Functionally, sulfur carrier protein which probably makes part of a sulfur-relay system. This is Sulfur carrier protein TusA from Shewanella woodyi (strain ATCC 51908 / MS32).